Here is a 494-residue protein sequence, read N- to C-terminus: Cardiolipin synthase (494 aa).

2 helical membrane passes run Ile14 to Ile34 and Ile45 to Leu65. PLD phosphodiesterase domains follow at residues Met229–Tyr256 and Asp407–Ser434. Catalysis depends on residues His234, Lys236, Asp241, His412, Lys414, and Asp419.

Belongs to the phospholipase D family. Cardiolipin synthase subfamily.

The protein resides in the cell membrane. It catalyses the reaction 2 a 1,2-diacyl-sn-glycero-3-phospho-(1'-sn-glycerol) = a cardiolipin + glycerol. Functionally, catalyzes the reversible phosphatidyl group transfer from one phosphatidylglycerol molecule to another to form cardiolipin (CL) (diphosphatidylglycerol) and glycerol. The sequence is that of Cardiolipin synthase (cls) from Staphylococcus aureus (strain Mu50 / ATCC 700699).